The primary structure comprises 1052 residues: Mitotic checkpoint serine/threonine-protein kinase BUB1 beta (1052 aa).

A BUB1 N-terminal domain is found at 56-219 (FESEIRFYSG…LEPSEPQRSS (164 aa)). The short motif at 105–112 (GETRYYND) is the Nuclear localization signal element. Residues 146 to 179 (AQFYISWAEEYEARENFKKADIIFQEGIERKAEP) form a necessary for interaction with KNL1 region. Disordered stretches follow at residues 206 to 256 (EEEA…NAVP) and 272 to 327 (ADTA…TSIP). The short motif at 217-225 (RSSLAELKS) is the D-box element. Residue K243 is modified to N6-acetyllysine; by PCAF. Residue S360 is modified to Phosphoserine. The disordered stretch occupies residues 361–381 (TRKPGREEGDPLQRVQSHQQG). Residue S428 is modified to Phosphoserine. The tract at residues 496 to 552 (SNPREISPAENILQEQPDSKGSSMPFSIFDESLSDKKDKSPATGGPQVLNAQRRPLS) is disordered. Positions 508 to 520 (LQEQPDSKGSSMP) are enriched in polar residues. S535 and S659 each carry phosphoserine. S665 carries the post-translational modification Phosphoserine; by PLK1. At S686 the chain carries Phosphoserine. The Protein kinase domain occupies 756–1040 (VIKQEHLTCD…TISPEALLTQ (285 aa)). Residue 762 to 770 (LTCDDYRLF) coordinates ATP. T781 is subject to Phosphothreonine; by PLK1. An ATP-binding site is contributed by K784. Catalysis depends on D871, which acts as the Proton acceptor. At T998 the chain carries Phosphothreonine; by PLK1. Residues S1033 and S1050 each carry the phosphoserine modification.

It belongs to the protein kinase superfamily. Ser/Thr protein kinase family. BUB1 subfamily. Interacts with CENPE. Interacts with PLK1. Part of a complex containing BUB3, CDC20 and BUB1B. Interacts with anaphase-promoting complex/cyclosome (APC/C). Interacts with KNL1. Interacts with KAT2B. Interacts with RIPK3. Interacts with the closed conformation form of MAD2L1. Interacts with CDC20. In terms of processing, proteolytically cleaved by caspase-3 in a cell cycle specific manner. The cleavage might be involved in the durability of the cell cycle delay. Acetylation at Lys-243 regulates its degradation and timing in anaphase entry. Post-translationally, ubiquitinated. Degraded by the proteasome. Ubiquitinated by UBR5, promoting disassembly of the mitotic checkpoint complex from the APC/C complex. In terms of processing, sumoylated with SUMO2 and SUMO3. The sumoylation mediates the association with CENPE at the kinetochore. Autophosphorylated in vitro. Intramolecular autophosphorylation stimulated by CENPE. Phosphorylated during mitosis and hyperphosphorylated in mitotically arrested cells. Phosphorylation at Ser-659 and Ser-1033 occurs at kinetochores upon mitotic entry with dephosphorylation at the onset of anaphase. Post-translationally, proteolytically cleaved by caspase-3 in a cell cycle specific manner. The cleavage might be involved in the durability of the cell cycle delay. Caspase-3 cleavage is associated with abrogation of the mitotic checkpoint. The major site of cleavage is at Asp-603. Highly expressed in thymus followed by spleen.

Its subcellular location is the cytoplasm. The protein resides in the nucleus. The protein localises to the chromosome. It is found in the centromere. It localises to the kinetochore. The enzyme catalyses L-seryl-[protein] + ATP = O-phospho-L-seryl-[protein] + ADP + H(+). It catalyses the reaction L-threonyl-[protein] + ATP = O-phospho-L-threonyl-[protein] + ADP + H(+). Its activity is regulated as follows. Kinase activity stimulated by CENPE. In terms of biological role, essential component of the mitotic checkpoint. Required for normal mitosis progression and tumor suppression. The mitotic checkpoint delays anaphase until all chromosomes are properly attached to the mitotic spindle. One of its checkpoint functions is to inhibit the activity of the anaphase-promoting complex/cyclosome (APC/C) by blocking the binding of CDC20 to APC/C, independently of its kinase activity. The other is to monitor kinetochore activities that depend on the kinetochore motor CENPE. Required for kinetochore localization of CENPE. Negatively regulates PLK1 activity in interphase cells and suppresses centrosome amplification. Also implicated in triggering apoptosis in polyploid cells that exit aberrantly from mitotic arrest. Essential for tumor suppression. May play a role in regulating aging and fertility. This Mus musculus (Mouse) protein is Mitotic checkpoint serine/threonine-protein kinase BUB1 beta (Bub1b).